A 628-amino-acid chain; its full sequence is 1-deoxy-D-xylulose-5-phosphate synthase (628 aa).

Residues histidine 80 and 121–123 contribute to the thiamine diphosphate site; that span reads GHS. Aspartate 152 contacts Mg(2+). Thiamine diphosphate contacts are provided by residues 153–154, asparagine 181, tyrosine 289, and glutamate 370; that span reads GG. Asparagine 181 lines the Mg(2+) pocket.

This sequence belongs to the transketolase family. DXPS subfamily. Homodimer. Requires Mg(2+) as cofactor. Thiamine diphosphate serves as cofactor.

It carries out the reaction D-glyceraldehyde 3-phosphate + pyruvate + H(+) = 1-deoxy-D-xylulose 5-phosphate + CO2. Its pathway is metabolic intermediate biosynthesis; 1-deoxy-D-xylulose 5-phosphate biosynthesis; 1-deoxy-D-xylulose 5-phosphate from D-glyceraldehyde 3-phosphate and pyruvate: step 1/1. Its function is as follows. Catalyzes the acyloin condensation reaction between C atoms 2 and 3 of pyruvate and glyceraldehyde 3-phosphate to yield 1-deoxy-D-xylulose-5-phosphate (DXP). The protein is 1-deoxy-D-xylulose-5-phosphate synthase of Alkalilimnicola ehrlichii (strain ATCC BAA-1101 / DSM 17681 / MLHE-1).